Here is an 874-residue protein sequence, read N- to C-terminus: Probable cation-transporting P-type ATPase (874 aa).

The Cytoplasmic segment spans residues 1 to 41 (MNSWTGLSEQAAIKSRQEHGANFLPEKKATPFWLLFLQQFK). Residues 42–62 (SLVVILLLLASLLSFVVAIVS) traverse the membrane as a helical segment. Residues 63–79 (GLRSNWNFNHDLIIEWV) lie on the Extracellular side of the membrane. A helical membrane pass occupies residues 80–100 (QPFIILLTVFANSLIGSIQEF). The Cytoplasmic segment spans residues 101 to 237 (KAQKSASALK…TKLSPLQQKL (137 aa)). The chain crosses the membrane as a helical span at residues 238–257 (EKIGKWFSWFGLGLFAVVFL). Topologically, residues 258–275 (VQTALLGFDNFTNNWSIA) are extracellular. The chain crosses the membrane as a helical span at residues 276-293 (LIGAIALVVAIIPEGLVT). The Cytoplasmic segment spans residues 294–644 (FINVIFALSV…EEGRKTFLTC (351 aa)). Asp331 functions as the 4-aspartylphosphate intermediate in the catalytic mechanism. 2 residues coordinate Mg(2+): Asp589 and Asp593. The chain crosses the membrane as a helical span at residues 645-664 (KRVLLNLFLTSIAGTVVVLL). Residues 665–687 (GLFILGQVFKTNLLQQGHDFQVF) lie on the Extracellular side of the membrane. Residues 688–708 (SPTQLLIINLFVHGFPAVALA) form a helical membrane-spanning segment. The Cytoplasmic portion of the chain corresponds to 709–726 (VQPVKEKLMVGSFSTKNL). Residues 727–749 (FYNRQGFDLIWQSLFLSFLTLLF) form a helical membrane-spanning segment. At 750–770 (YSLGIIYAINNRDLQTSGDLI) the chain is on the extracellular side. Residues 771 to 790 (NRAGSTCGFFILGASAALNS) traverse the membrane as a helical segment. Residues 791-803 (LNLMVDKPLLMTN) are Cytoplasmic-facing. A helical transmembrane segment spans residues 804 to 826 (PWFFKLVWIGSLASILVFLLIIF). Residues 827–844 (INPLGLVFNVLQDLTNHP) are Extracellular-facing. The helical transmembrane segment at 845–865 (VLISYSFGGVILYMGMNEVVK) threads the bilayer. The Cytoplasmic portion of the chain corresponds to 866 to 874 (LIRLGYGNI).

The protein belongs to the cation transport ATPase (P-type) (TC 3.A.3) family. Type II subfamily.

It localises to the cell membrane. The catalysed reaction is ATP + H2O = ADP + phosphate + H(+). In terms of biological role, could mediate calcium influx. In Mycoplasma genitalium (strain ATCC 33530 / DSM 19775 / NCTC 10195 / G37) (Mycoplasmoides genitalium), this protein is Probable cation-transporting P-type ATPase (pacL).